Reading from the N-terminus, the 230-residue chain is uncharacterized protein (230 aa).

In terms of domain architecture, ABC transporter spans 2 to 230 (IQLSNVRKSY…ASSGQRSVGE (229 aa)). Residue 38–45 (GPSGSGKS) coordinates ATP.

Belongs to the ABC transporter superfamily. In terms of assembly, part of a complex composed of YknX, YknY and YknZ. The complex interacts with YknW.

It is found in the cell membrane. In terms of biological role, part of an unusual four-component transporter, which is required for protection against the killing factor SdpC (sporulation-delaying protein). This is an uncharacterized protein from Bacillus subtilis (strain 168).